Here is an 82-residue protein sequence, read N- to C-terminus: ATP synthase subunit c, chloroplastic (82 aa).

The next 2 membrane-spanning stretches (helical) occupy residues 4–24 and 57–77; these read IISAASVIAAGLAIGLAAIGP and LAFMEALTIYGLVVALALLFA.

Belongs to the ATPase C chain family. As to quaternary structure, F-type ATPases have 2 components, F(1) - the catalytic core - and F(0) - the membrane proton channel. F(1) has five subunits: alpha(3), beta(3), gamma(1), delta(1), epsilon(1). F(0) has four main subunits: a(1), b(1), b'(1) and c(10-14). The alpha and beta chains form an alternating ring which encloses part of the gamma chain. F(1) is attached to F(0) by a central stalk formed by the gamma and epsilon chains, while a peripheral stalk is formed by the delta, b and b' chains.

The protein localises to the plastid. It localises to the chloroplast thylakoid membrane. In terms of biological role, f(1)F(0) ATP synthase produces ATP from ADP in the presence of a proton or sodium gradient. F-type ATPases consist of two structural domains, F(1) containing the extramembraneous catalytic core and F(0) containing the membrane proton channel, linked together by a central stalk and a peripheral stalk. During catalysis, ATP synthesis in the catalytic domain of F(1) is coupled via a rotary mechanism of the central stalk subunits to proton translocation. Its function is as follows. Key component of the F(0) channel; it plays a direct role in translocation across the membrane. A homomeric c-ring of between 10-14 subunits forms the central stalk rotor element with the F(1) delta and epsilon subunits. This is ATP synthase subunit c, chloroplastic from Trieres chinensis (Marine centric diatom).